The following is a 301-amino-acid chain: MRFKGLDLNLLVVLDALLTARNLTAAASSINLSQPAMSAAVARLRNYFNDELFTMSGRERVLTPRAETLAPAVRGALLHIQCSIISWDPFNPAQSDRRFRIILSDFATLVFFEKVVERVAREAPAVSFELRPLDNDPDELLRRGDVDFVILPEFFMSSAHPRAALFDETFVCVGCPTNKQLPRQLTFERYVSMKHIAFRVGGAQMPSIEEQFLLEHGLKRRVEIVVQAFSMIPPMVSGTARIATMPFRLVQHFKKTFPLRIIELPRPLPTFTEAVQWPTLHNSDPASIWMRQIMLQEASRM.

The 58-residue stretch at 6–63 (LDLNLLVVLDALLTARNLTAAASSINLSQPAMSAAVARLRNYFNDELFTMSGRERVLT) folds into the HTH lysR-type domain. A DNA-binding region (H-T-H motif) is located at residues 23 to 43 (LTAAASSINLSQPAMSAAVAR).

It belongs to the LysR transcriptional regulatory family.

NodD regulates the expression of the nodABCFE genes which encode other nodulation proteins. NodD is also a negative regulator of its own expression. Binds flavonoids as inducers. In Mesorhizobium japonicum (strain LMG 29417 / CECT 9101 / MAFF 303099) (Mesorhizobium loti (strain MAFF 303099)), this protein is Nodulation protein D 3 (nodD3).